Consider the following 1348-residue polypeptide: Putative late blight resistance protein homolog R1B-12 (1348 aa).

Coiled-coil stretches lie at residues 446–469 (RYSDSLAFLKNQLQVIQTEFESLQ) and 561–583 (PRMNEEIVGFEDVIENLRKKLLN). Residues 552–848 (RTSSQLTRTP…ISESFIKSCE (297 aa)) form the NB-ARC domain. 595 to 602 (GMPGLGKT) is a binding site for ATP. LRR repeat units lie at residues 977 to 1001 (FKFLKVLDLEHQFFIDFIPTELLYL), 1051 to 1074 (LRHLHIPYFSTEKEEALLENSAKL), 1123 to 1147 (PITLEILKLYRSSDFKVIPFCISAQ), 1151 to 1170 (YLKLSGFYLNSQYLSETADH), 1171 to 1194 (LKHLEVLKLHNIEFGGHSEWEVSN), 1197 to 1219 (FPQLKILKLEYVSLMKLIVADDA), 1220 to 1244 (FPNLEQLVLHDCEDLMEIPSCFMDI), and 1309 to 1332 (LPGIQSIAVDSNEKKFIVIGDMDA). The region spanning 1284 to 1348 (VKKMVLKFDT…VGKLINRGML (65 aa)) is the HMA domain.

This sequence belongs to the disease resistance NB-LRR family.

The protein resides in the cytoplasm. It localises to the membrane. Confers resistance to late blight (Phytophthora infestans) races carrying the avirulence gene Avr1. Resistance proteins guard the plant against pathogens that contain an appropriate avirulence protein via an indirect interaction with this avirulence protein. That triggers a defense system including the hypersensitive response, which restricts the pathogen growth. The sequence is that of Putative late blight resistance protein homolog R1B-12 (R1B-12) from Solanum demissum (Wild potato).